The sequence spans 341 residues: L-threonine 3-dehydrogenase (341 aa).

Cys-38 contributes to the Zn(2+) binding site. Residues Thr-40 and His-43 each act as charge relay system in the active site. Zn(2+) contacts are provided by His-63, Glu-64, Cys-93, Cys-96, Cys-99, and Cys-107. NAD(+) is bound by residues Ile-175, Asp-195, Arg-200, 262 to 264, and 286 to 287; these read LGI and IY.

This sequence belongs to the zinc-containing alcohol dehydrogenase family. In terms of assembly, homotetramer. Requires Zn(2+) as cofactor.

The protein localises to the cytoplasm. The enzyme catalyses L-threonine + NAD(+) = (2S)-2-amino-3-oxobutanoate + NADH + H(+). It functions in the pathway amino-acid degradation; L-threonine degradation via oxydo-reductase pathway; glycine from L-threonine: step 1/2. Its function is as follows. Catalyzes the NAD(+)-dependent oxidation of L-threonine to 2-amino-3-ketobutyrate. This is L-threonine 3-dehydrogenase from Chromobacterium violaceum (strain ATCC 12472 / DSM 30191 / JCM 1249 / CCUG 213 / NBRC 12614 / NCIMB 9131 / NCTC 9757 / MK).